The primary structure comprises 149 residues: Transcriptional repressor NrdR (149 aa).

Residues 3–34 fold into a zinc finger; that stretch reads CPFCSATDTKVIDSRLVADGHQVRRRRECTEC. One can recognise an ATP-cone domain in the interval 49–139; sequence PRVIKRDGTR…VYRAFEDVSQ (91 aa).

Belongs to the NrdR family. It depends on Zn(2+) as a cofactor.

In terms of biological role, negatively regulates transcription of bacterial ribonucleotide reductase nrd genes and operons by binding to NrdR-boxes. This chain is Transcriptional repressor NrdR, found in Shewanella frigidimarina (strain NCIMB 400).